Reading from the N-terminus, the 258-residue chain is Short-chain dehydrogenase/reductase aba4 (258 aa).

NADP(+) is bound by residues Ile-20, Asp-66, and Lys-130. Catalysis depends on proton donor residues Ser-146 and Tyr-160. Residues Tyr-160, Lys-164, Ile-193, and Thr-195 each contribute to the NADP(+) site. Catalysis depends on Lys-164, which acts as the Lowers pKa of active site Tyr.

The protein belongs to the short-chain dehydrogenases/reductases (SDR) family.

It participates in hormone biosynthesis. Short-chain dehydrogenase/reductase; part of the gene cluster that mediates the biosynthesis of abscisic acid (ABA), a phytohormone that acts antagonistically toward salicylic acid (SA), jasmonic acid (JA) and ethylene (ETH) signaling, to impede plant defense responses. The first step of the pathway catalyzes the reaction from farnesyl diphosphate to alpha-ionylideneethane performed by the alpha-ionylideneethane synthase aba3 via a three-step reaction mechanism involving 2 neutral intermediates, beta-farnesene and allofarnesene. The cytochrome P450 monooxygenase aba1 might then be involved in the conversion of alpha-ionylideneethane to alpha-ionylideneacetic acid. Alpha-ionylideneacetic acid is further converted to abscisic acid in 2 steps involving the cytochrome P450 monooxygenase aba2 and the short-chain dehydrogenase/reductase aba4, via the intermediates 1'-deoxy-ABA or 1',4'-trans-diol-ABA, depending on the order of action of these 2 enzymes. Aba2 is responsible for the hydroxylation of carbon atom C-1' and aba4 might be involved in the oxidation of the C-4' carbon atom. The protein is Short-chain dehydrogenase/reductase aba4 of Botryotinia fuckeliana (Noble rot fungus).